A 348-amino-acid polypeptide reads, in one-letter code: Elongation factor Ts (348 aa).

The segment at 82 to 85 (TDFV) is involved in Mg(2+) ion dislocation from EF-Tu.

The protein belongs to the EF-Ts family.

The protein resides in the cytoplasm. In terms of biological role, associates with the EF-Tu.GDP complex and induces the exchange of GDP to GTP. It remains bound to the aminoacyl-tRNA.EF-Tu.GTP complex up to the GTP hydrolysis stage on the ribosome. The sequence is that of Elongation factor Ts from Aliarcobacter butzleri (strain RM4018) (Arcobacter butzleri).